A 544-amino-acid chain; its full sequence is MTKKLSPLEKKNRKPASKACVFCHSKHLQCSNERPCKNCMKRNLGDQCHDAIRKRAKYLNTSGVKKMKSRTNSISSSYRSPSVSESPQNPYTHSIIKQEPDLNMRGELQSIQQENTSHNQPGPSNVSHYVDQRPTIPTNTMLDTTNDVLNKLLYSEPIHSDSISLRDSISEQPEMDSNRRSIDTMFNSNYLNQEYLMLGDIILHSKPSSPSPSNTSASEYNGDATISPANTLLNNTRLDFDNSNDHMSNSKRKLNKLKDSRPFIALGVSNDVPISLQPEGTLSLDNLSTKNEIMNKDNISSNSLKTDYVSPLISHHIYQSVQDIYMHSIPNFDYPQSYHSLTNFLKRRFSGNSLAHDQRQAKRNNLLIILKLIASYRPTFISAHKNLLKPYDLLFLEMSFQRSLIDYEKLLLFNSSPSIIWRRTGEIVSISNDLLSILGFNLSEILSKRTFIMELMYDDESIINYFKLFKSVAVGNLHSSIITKCKLMKNSSAAFHNEASDVADREYIEFCSAWTVKRDPFDIPMLIIGQFLPILPGGEGVRKY.

The zn(2)-C6 fungal-type DNA-binding region spans Cys20–Cys48. The segment at Lys65–His93 is disordered. Positions Arg70–Ser86 are enriched in low complexity. Residues Ser403 to Gly475 enclose the PAS domain.

The protein belongs to the ERT1/acuK family.

It is found in the nucleus. In terms of biological role, transcription factor which regulates nonfermentable carbon utilization. This is Glucose starvation modulator protein 1 (GSM1) from Debaryomyces hansenii (strain ATCC 36239 / CBS 767 / BCRC 21394 / JCM 1990 / NBRC 0083 / IGC 2968) (Yeast).